The sequence spans 289 residues: 4-diphosphocytidyl-2-C-methyl-D-erythritol kinase (289 aa).

Lys-13 is an active-site residue. ATP is bound at residue 101–111 (PMGGGLGGGSS). The active site involves Asp-143.

It belongs to the GHMP kinase family. IspE subfamily.

The catalysed reaction is 4-CDP-2-C-methyl-D-erythritol + ATP = 4-CDP-2-C-methyl-D-erythritol 2-phosphate + ADP + H(+). It participates in isoprenoid biosynthesis; isopentenyl diphosphate biosynthesis via DXP pathway; isopentenyl diphosphate from 1-deoxy-D-xylulose 5-phosphate: step 3/6. Its function is as follows. Catalyzes the phosphorylation of the position 2 hydroxy group of 4-diphosphocytidyl-2C-methyl-D-erythritol. This chain is 4-diphosphocytidyl-2-C-methyl-D-erythritol kinase, found in Janthinobacterium sp. (strain Marseille) (Minibacterium massiliensis).